The chain runs to 310 residues: HPr kinase/phosphorylase (310 aa).

Catalysis depends on residues H138 and K159. ATP is bound at residue 153-160 (GASGIGKS). S160 contributes to the Mg(2+) binding site. The active-site Proton acceptor; for phosphorylation activity. Proton donor; for dephosphorylation activity is D177. Positions 201 to 210 (IEIRGVGIID) are important for the catalytic mechanism of both phosphorylation and dephosphorylation. E202 provides a ligand contact to Mg(2+). Residue R243 is part of the active site. An important for the catalytic mechanism of dephosphorylation region spans residues 264–269 (PVKTGR).

It belongs to the HPrK/P family. In terms of assembly, homohexamer. Requires Mg(2+) as cofactor.

The catalysed reaction is [HPr protein]-L-serine + ATP = [HPr protein]-O-phospho-L-serine + ADP + H(+). The enzyme catalyses [HPr protein]-O-phospho-L-serine + phosphate + H(+) = [HPr protein]-L-serine + diphosphate. In terms of biological role, catalyzes the ATP- as well as the pyrophosphate-dependent phosphorylation of a specific serine residue in HPr, a phosphocarrier protein of the phosphoenolpyruvate-dependent sugar phosphotransferase system (PTS). HprK/P also catalyzes the pyrophosphate-producing, inorganic phosphate-dependent dephosphorylation (phosphorolysis) of seryl-phosphorylated HPr (P-Ser-HPr). The two antagonistic activities of HprK/P are regulated by several intracellular metabolites, which change their concentration in response to the absence or presence of rapidly metabolisable carbon sources (glucose, fructose, etc.) in the growth medium. Therefore, by controlling the phosphorylation state of HPr, HPrK/P is a sensor enzyme that plays a major role in the regulation of carbon metabolism and sugar transport: it mediates carbon catabolite repression (CCR), and regulates PTS-catalyzed carbohydrate uptake and inducer exclusion. This is HPr kinase/phosphorylase from Lactococcus lactis subsp. cremoris (strain SK11).